Reading from the N-terminus, the 120-residue chain is Late histone H2A.2.2 (120 aa).

The segment covering 1-18 (MSGRGKGAKSKSKAKSRS) has biased composition (basic residues). Residues 1–22 (MSGRGKGAKSKSKAKSRSSRAG) form a disordered region. The residue at position 2 (serine 2) is an N-acetylserine. Phosphoserine is present on serine 2. Glutamine 104 carries the N5-methylglutamine modification. Lysine 119 participates in a covalent cross-link: Glycyl lysine isopeptide (Lys-Gly) (interchain with G-Cter in ubiquitin).

It belongs to the histone H2A family. The nucleosome is a histone octamer containing two molecules each of H2A, H2B, H3 and H4 assembled in one H3-H4 heterotetramer and two H2A-H2B heterodimers. The octamer wraps approximately 147 bp of DNA. Monoubiquitination of Lys-119 gives a specific tag for epigenetic transcriptional repression. Post-translationally, phosphorylation of Ser-2 directly represses transcription.

It is found in the nucleus. It localises to the chromosome. Functionally, core component of nucleosome. Nucleosomes wrap and compact DNA into chromatin, limiting DNA accessibility to the cellular machineries which require DNA as a template. Histones thereby play a central role in transcription regulation, DNA repair, DNA replication and chromosomal stability. DNA accessibility is regulated via a complex set of post-translational modifications of histones, also called histone code, and nucleosome remodeling. The chain is Late histone H2A.2.2 from Psammechinus miliaris (Green sea urchin).